The chain runs to 174 residues: Co-chaperone protein HscB (174 aa).

The 73-residue stretch at 2-74 (DYFTLFGLPA…LKRAEYMLSL (73 aa)) folds into the J domain.

This sequence belongs to the HscB family. In terms of assembly, interacts with HscA and stimulates its ATPase activity. Interacts with IscU.

Functionally, co-chaperone involved in the maturation of iron-sulfur cluster-containing proteins. Seems to help targeting proteins to be folded toward HscA. The polypeptide is Co-chaperone protein HscB (Yersinia pseudotuberculosis serotype O:1b (strain IP 31758)).